We begin with the raw amino-acid sequence, 331 residues long: Flagellar P-ring protein (331 aa).

Residues 1-22 (MRKVTIFIIIIVALTGFGSVRI) form the signal peptide.

The protein belongs to the FlgI family. In terms of assembly, the basal body constitutes a major portion of the flagellar organelle and consists of four rings (L,P,S, and M) mounted on a central rod.

Its subcellular location is the periplasm. It localises to the bacterial flagellum basal body. Assembles around the rod to form the L-ring and probably protects the motor/basal body from shearing forces during rotation. This Pseudothermotoga lettingae (strain ATCC BAA-301 / DSM 14385 / NBRC 107922 / TMO) (Thermotoga lettingae) protein is Flagellar P-ring protein.